Here is a 523-residue protein sequence, read N- to C-terminus: Light-independent protochlorophyllide reductase subunit B (523 aa).

Residue Asp-36 participates in [4Fe-4S] cluster binding. Asp-290 serves as the catalytic Proton donor. 425 to 426 serves as a coordination point for substrate; sequence GL.

Belongs to the ChlB/BchB/BchZ family. Protochlorophyllide reductase is composed of three subunits; ChlL, ChlN and ChlB. Forms a heterotetramer of two ChlB and two ChlN subunits. The cofactor is [4Fe-4S] cluster.

It carries out the reaction chlorophyllide a + oxidized 2[4Fe-4S]-[ferredoxin] + 2 ADP + 2 phosphate = protochlorophyllide a + reduced 2[4Fe-4S]-[ferredoxin] + 2 ATP + 2 H2O. It participates in porphyrin-containing compound metabolism; chlorophyll biosynthesis (light-independent). Functionally, component of the dark-operative protochlorophyllide reductase (DPOR) that uses Mg-ATP and reduced ferredoxin to reduce ring D of protochlorophyllide (Pchlide) to form chlorophyllide a (Chlide). This reaction is light-independent. The NB-protein (ChlN-ChlB) is the catalytic component of the complex. In Prochlorococcus marinus (strain MIT 9215), this protein is Light-independent protochlorophyllide reductase subunit B.